The following is a 430-amino-acid chain: Arrestin-related trafficking adapter 10 (430 aa).

The tract at residues 55-75 (AEADRHSSRLPQDPQTQYTKE) is disordered. The segment covering 63-72 (RLPQDPQTQY) has biased composition (polar residues).

The protein belongs to the ART10 family.

It is found in the cytoplasm. Its function is as follows. May regulate endocytosis by recruiting RSP5 ubiquitin ligase activity to specific plasma membrane proteins in response to extracellular stimuli. This chain is Arrestin-related trafficking adapter 10 (ART10), found in Eremothecium gossypii (strain ATCC 10895 / CBS 109.51 / FGSC 9923 / NRRL Y-1056) (Yeast).